A 499-amino-acid chain; its full sequence is Lysine--tRNA ligase (499 aa).

Glu-409 and Glu-416 together coordinate Mg(2+).

Belongs to the class-II aminoacyl-tRNA synthetase family. As to quaternary structure, homodimer. The cofactor is Mg(2+).

It localises to the cytoplasm. It carries out the reaction tRNA(Lys) + L-lysine + ATP = L-lysyl-tRNA(Lys) + AMP + diphosphate. This chain is Lysine--tRNA ligase, found in Pseudomonas fluorescens (strain Pf0-1).